A 226-amino-acid chain; its full sequence is Cytidylate kinase (226 aa).

12-20 (GPSGAGKGT) provides a ligand contact to ATP.

Belongs to the cytidylate kinase family. Type 1 subfamily.

Its subcellular location is the cytoplasm. The catalysed reaction is CMP + ATP = CDP + ADP. It carries out the reaction dCMP + ATP = dCDP + ADP. The chain is Cytidylate kinase from Xanthomonas campestris pv. campestris (strain B100).